The following is a 309-amino-acid chain: Aspartate carbamoyltransferase catalytic subunit (309 aa).

Carbamoyl phosphate contacts are provided by Arg-55 and Thr-56. Lys-85 provides a ligand contact to L-aspartate. Carbamoyl phosphate-binding residues include Arg-106, His-135, and Gln-138. Arg-168 and Arg-230 together coordinate L-aspartate. Carbamoyl phosphate-binding residues include Leu-268 and Pro-269.

The protein belongs to the aspartate/ornithine carbamoyltransferase superfamily. ATCase family. In terms of assembly, heterododecamer (2C3:3R2) of six catalytic PyrB chains organized as two trimers (C3), and six regulatory PyrI chains organized as three dimers (R2).

It catalyses the reaction carbamoyl phosphate + L-aspartate = N-carbamoyl-L-aspartate + phosphate + H(+). The protein operates within pyrimidine metabolism; UMP biosynthesis via de novo pathway; (S)-dihydroorotate from bicarbonate: step 2/3. Functionally, catalyzes the condensation of carbamoyl phosphate and aspartate to form carbamoyl aspartate and inorganic phosphate, the committed step in the de novo pyrimidine nucleotide biosynthesis pathway. The polypeptide is Aspartate carbamoyltransferase catalytic subunit (Vibrio vulnificus (strain CMCP6)).